Here is a 247-residue protein sequence, read N- to C-terminus: Transmembrane protein 33 (247 aa).

Position 2 is an N-acetylalanine (Ala-2). The Lumenal segment spans residues 2–31 (ADTTPNGPQGAGAVQFMMTNKLDTAMWLSR). Residues 32-52 (LFTVYCSALFVLPLLGLHEAA) traverse the membrane as a helical segment. Over 53 to 100 (SFYQRALLANALTSALRLHQRLPHFQLSRAFLAQALLEDSCHYLLYSL) the chain is Cytoplasmic. Residues 101–121 (IFVNSYPVTMSIFPVLLFSLL) form a helical membrane-spanning segment. Over 122–155 (HAATYTKKVLDARGSNSLPLLRSVLDKLSANQQN) the chain is Lumenal. A helical transmembrane segment spans residues 156 to 176 (ILKFIACNEIFLMPATVFMLF). Residues 177-247 (SGQGSLLQPF…FISRLAPTVP (71 aa)) lie on the Cytoplasmic side of the membrane.

It belongs to the PER33/POM33 family. As to quaternary structure, interacts with EIF2AK3. Interacts with ARL6IP1, isoform RTN1-A of RTN1, isoform RTN2-B of RTN2, isoform 3 of RTN3 and isoform 3 of RTN4. Interacts with RNF5. Interacts with RNF26. Interacts with PKD2. As to expression, prostate cancer and several cancer cell lines (at protein level). Widely expressed. Expressed at higher levels in endocrine-resistant breast cancer cells as compared to endocrine-sensitive breast cancer cells. Expressed at higher levels in early recurrence breast cancer tissues as compared to non-recurrent breast tumors.

Its subcellular location is the endoplasmic reticulum membrane. The protein localises to the melanosome. It localises to the nucleus envelope. Acts as a regulator of the tubular endoplasmic reticulum (ER) network by modulating intracellular calcium homeostasis. Mechanistically, stimulates PKD2 calcium-dependent activity. Suppresses the RTN3/4-induced formation of the ER tubules. Positively regulates PERK-mediated and IRE1-mediated unfolded protein response signaling. Plays an essential role in VEGF-mediated release of Ca(2+) from ER stores during angiogenesis. Also plays a role in the modulation of innate immune signaling through the cGAS-STING pathway by interacting with RNF26. Participates in lipid metabolism by acting as a downstream effector of the pyruvate kinase/PKM. Forms a complex with RNF5 to facilitate polyubiquitination and subsequent degradation of SCAP on the ER membrane. This Homo sapiens (Human) protein is Transmembrane protein 33 (TMEM33).